The following is a 491-amino-acid chain: DEAD-box ATP-dependent RNA helicase 36 (491 aa).

Residues 1-10 (MEEPTPEEEG) show a composition bias toward acidic residues. Residues 1 to 56 (MEEPTPEEEGGITIMSKSRKNPKTVVNIQSQKLDSDQNTPQFEKFTNPNPSSDTTS) are disordered. Over residues 24–56 (TVVNIQSQKLDSDQNTPQFEKFTNPNPSSDTTS) the composition is skewed to polar residues. Residues 58 to 86 (TNFEGLGLAEWAVETCKELGMRKPTPVQT) carry the Q motif motif. Residues 89-262 (VPKILAGRDV…EHSSNKAYFY (174 aa)) form the Helicase ATP-binding domain. 102–109 (AQTGSGKT) lines the ATP pocket. The short motif at 210-213 (DEAD) is the DEAD box element. Residues 289 to 438 (YLVHILSQME…NKKVITDSLE (150 aa)) enclose the Helicase C-terminal domain. Positions 471 to 491 (KTLADKGLLKKRGKRQKSTEN) are disordered. A compositionally biased stretch (basic residues) spans 479 to 491 (LKKRGKRQKSTEN).

This sequence belongs to the DEAD box helicase family. DDX49/DBP8 subfamily.

The catalysed reaction is ATP + H2O = ADP + phosphate + H(+). This chain is DEAD-box ATP-dependent RNA helicase 36 (RH36), found in Arabidopsis thaliana (Mouse-ear cress).